The chain runs to 844 residues: MVNFTVDEIRGMMDKKRNIRNMSVIAHVDHGKSTLTDSLVSKAGIIAGARAGETRFTDTRKDEQDRCITIKSTAISMFFELEEKDLVFITNPDQREKSEKGFLINLIDSPGHVDFSSEVTAALRVTDGALVVVDCVSGVCVQTETVLRQAIAERIKPILFMNKMDRALLELQLEAEELYQTFQRIVENVNVIIATYNDDGGPMGEVRVDPSKGSVGFGSGLHGWAFTLKQFSEMYADKFKIDLVKLMNRLWGENFFNPQTKKWSKQKDDDNKRSFCMYVLDPIYKVFDAIMKFKKEEIDDLLKKIGVTIKHEDSDKDGKALLKVVMRSWLPAGEALLQMIAIHLPSPVVAQKYRMEMLYEGPHDDEAAIGIKSCDPEAPLMMYVSKMVPTSDKGRFYAFGRVFSGKVVTGQKARIMGPNFTPGKKEDLYEKTIQRTILMMGRYVEAIEDVPSGNICGLVGVDQFLVKTGTITTFKNAHNMKVMKFSVSPVVRVAVEPKNPADLPKLVEGLKRLAKSDPMVQCINEESGEHIVAGAGELHLEICLKDLEEDHACIPIKKSDPVVSYRETVAEESDQLCLSKSPNKHNRLFMKAQPMPDGLPEDIDEGRVNPRDDFKTRARYLTEKYEYDVTEARKIWCFGPEGTGPNILVDCSKGVQYLNEIKDSVVAGFQWAAKEGVMAEENLRGVRFNIYDVTLHTDAIHRGGGQIIPTTRRCLYACLLTAQPRLMEPVYLCEIQCPEVAVGGIYGVLNRRRGHVFEESQVAGTPMFIVKAYLPVNESFGFTADLRSNTGGQAFPQCVFDHWQVLPGDPCEPQSKPYNVVQETRKRKGLKEGLPDLTQYLDKL.

The tr-type G domain maps to 17–348; sequence RNIRNMSVIA…MIAIHLPSPV (332 aa). 26-33 is a binding site for GTP; sequence AHVDHGKS. Residues T57 and T59 each carry the phosphothreonine modification. Residues 162–165 and 219–221 each bind GTP; these read NKMD and SGL. S488 carries the post-translational modification Phosphoserine. Position 701 is a diphthamide (H701).

Belongs to the TRAFAC class translation factor GTPase superfamily. Classic translation factor GTPase family. EF-G/EF-2 subfamily. Post-translationally, phosphorylation by EF-2 kinase completely inactivates EF-2.

Its subcellular location is the cytoplasm. It catalyses the reaction GTP + H2O = GDP + phosphate + H(+). In terms of biological role, catalyzes the GTP-dependent ribosomal translocation step during translation elongation. During this step, the ribosome changes from the pre-translocational (PRE) to the post-translocational (POST) state as the newly formed A-site-bound peptidyl-tRNA and P-site-bound deacylated tRNA move to the P and E sites, respectively. Catalyzes the coordinated movement of the two tRNA molecules, the mRNA and conformational changes in the ribosome. This is Translation elongation factor 2 from Bombyx mori (Silk moth).